A 1290-amino-acid chain; its full sequence is MTAIDVPWLSTPRRDNSHGTRSNSSCQPSCTQRIAVPISPDAVKYPLAVFCFAWAVTLGAYLDSQELVIGFAFHGWDGDTSIPSAGTCRIRIRPEQEILPALDEVVADGDKGLRSWVAQGAGSETDIAIQRKEVGDSLHPAVHGDEKLSPEIIITPSGNQGPYHVQGRFDPHIVAPALAHMMLHQFAFAVQGIVRGQSSIASSQVKDLQAISPDGMAQLMRWNRQSAAEEDGACVQDLIQRTCQQQPHAMAVCAWDGSWSYQELDCQASHLASQLCDHGIEPEKFVGLLFEKSKWTTVAILAVLKAGGAFVLLDPTQPAAYLSAICTMTRTALLLCSSHNQRLAAELRQTTIQVPRDPYHGAMPTSDFRRQSSPAVQPHHTLYACFTSGSTGRPKGFIIDHVAFNSGLQTYAHATGLGCDSRVFQFASYSFAPSITDQLASLIVGASICVPAEEELQNDVEGSISQLQATWLKLTPSVARTLDPGRLPCVKTLILVGEEAQVSDVAAWQDHGITVLGLYGQSENAKGTMVSRKSSEDADPGNIGSPFCAVGWVVDPDDYHRLMPIGATGELLLESPCLCRGYIDNEDETKLAFVSKPSWLTQVRGQGTAQPLLRTGDIVRYNCVDGTFCLVGRKGNRVKLRGQRLELAQVEHHLRSCLSSTHPVLADVVQPANENGRDPMLVAFVPWADSQSAADATDGFFAPPTKDFQTQARAVLGRLRHLLPSFMVPSTLLAVRTIPRTGTGKIHRRRLQEAASMLSRKQLMAYISPFIPYRAPETELERKLQRACGRLLNIEADQISMQDNFFDLGGNSLTARQLVAVARAEGLQVSVAQIFQQPTLAGLAQTHRHPVRRAEVPRSSHDPDPFGRVRDDVRREGLPHIARGNIEDALPVLYTQMTTARDHCVDFFPLRVIGGQLDPEQLRLAWTRVIQAFPILRTVFPRFRGRFIQLVVRDIGDSNFYRVVEAPSGQTAEEWARALCTEAIQFRCPVDRPVAQLTLIQAAGSSALVLRLCHAQYDGSCLEHLVRSLMMAYHGRPLVVESDFQAYTRTCLRLRIPEVLDFWRRFLAGSSPTQLASSMTGDREAARKINRSFFRREVNSLAAPAGFTLATVVKAAWSWVLRNETRSEDVVFGQLVSCRGSVPLPHADTIIGPCMNIIPVRVGRDLLGAVQAQHAQTMEFDMIGMDEIVRHCTSWPAGTEPDSIIIHENFHVDWEVHDGGVTIQKIAAVFNQQPSSLTFLITIPTETGLIAVLMAPANMSSTHADRVLDLFCNTLTRLAWSPAAVLRRSE.

A disordered region spans residues 1–27 (MTAIDVPWLSTPRRDNSHGTRSNSSCQ). The segment at 260–657 (SYQELDCQAS…AQVEHHLRSC (398 aa)) is adenylation. A Carrier domain is found at 775 to 851 (APETELERKL…GLAQTHRHPV (77 aa)). The residue at position 812 (Ser812) is an O-(pantetheine 4'-phosphoryl)serine. A disordered region spans residues 846-870 (THRHPVRRAEVPRSSHDPDPFGRVR). Residues 852 to 870 (RRAEVPRSSHDPDPFGRVR) show a composition bias toward basic and acidic residues. Positions 914–1162 (GGQLDPEQLR…PCMNIIPVRV (249 aa)) are condensation.

The protein belongs to the NRP synthetase family.

Nonribosomal peptide synthesis (NRPS) is a key mechanism responsible for the biosynthesis of bioactive metabolites which are potentially contributing to organismal virulence. The chain is Nonribosomal peptide synthetase 6 (NRPS6) from Aspergillus fumigatus (strain ATCC MYA-4609 / CBS 101355 / FGSC A1100 / Af293) (Neosartorya fumigata).